Consider the following 309-residue polypeptide: Probable ABC transporter permease protein YqgH (309 aa).

6 helical membrane passes run M30–L50, F88–I108, L133–I153, L165–A185, L214–F234, and N280–I300. The ABC transmembrane type-1 domain occupies I89–I300.

Belongs to the binding-protein-dependent transport system permease family. CysTW subfamily.

The protein localises to the cell membrane. Part of the binding-protein-dependent transport system YqgGHIJK. Probably responsible for the translocation of the substrate across the membrane. This Bacillus subtilis (strain 168) protein is Probable ABC transporter permease protein YqgH (yqgH).